Consider the following 410-residue polypeptide: D-amino acid dehydrogenase (410 aa).

9 to 14 (GGGIVG) contributes to the FAD binding site.

Belongs to the DadA oxidoreductase family. The cofactor is FAD.

Its subcellular location is the cell inner membrane. The enzyme catalyses a D-alpha-amino acid + a quinone + H2O = a 2-oxocarboxylate + a quinol + NH4(+). Activity is markedly inhibited by benzoate, and moderately by SH reagents such as p-hydroxymercuribenzoate, iodoacetamide, and iodoacetate. Functionally, catalyzes the oxidative deamination of D-amino acids. Has broad substrate specificity; is mostly active on D-proline, and to a lesser extent, on several other D-amino acids such as D-alanine, D-phenylalanine and D-serine. Mediates electron transport from D-proline to coenzyme Q1 in vitro, and is involved in the electron transport chain from D-proline to the c-type cytochrome in vivo. The polypeptide is D-amino acid dehydrogenase (Helicobacter pylori (Campylobacter pylori)).